The primary structure comprises 484 residues: Falcipain-2a (484 aa).

Topologically, residues 1 to 35 are cytoplasmic; sequence MDYNMDYAPHEVISQQGERFVDKYVDRKILKNKKS. The propeptide at 1 to 243 is activation peptide; sequence MDYNMDYAPH…PLKNSKYLLD (243 aa). The short motif at 16 to 25 is the Bipartite vacuolar targeting signal 1 element; it reads QGERFVDKYV. A helical; Signal-anchor for type II membrane protein transmembrane segment spans residues 36–56; the sequence is LLVIISLSVLSVVGFVLFYFT. Residues 57 to 484 are Lumenal-facing; the sequence is PNSRKSDLFK…GTDAFIPLIE (428 aa). N-linked (GlcNAc...) asparagine glycosylation occurs at asparagine 67. A Bipartite vacuolar targeting signal 2 motif is present at residues 84–105; the sequence is KSPNGKKFIVSKIDEALSFYDS. The Nose motif; required for the correct folding of the mature form motif lies at 244-260; the sequence is QMNYEEVIKKYKGNENF. Intrachain disulfides connect cysteine 282–cysteine 323, cysteine 316–cysteine 357, cysteine 342–cysteine 362, and cysteine 411–cysteine 472. Residue cysteine 285 is part of the active site. Histidine 417 is a catalytic residue. The short motif at 428 to 437 is the Arm motif; binds to host hemoglobin and required for the inhibitory interaction between the propeptide and the catalytic domain element; the sequence is EIVNPLTKKG. Residue asparagine 447 is part of the active site.

It belongs to the peptidase C1 family. As to quaternary structure, component of the hemozoin formation complex (HFC) composed of falcipains FP2A and/or FP2B, plasmepsins PMII, PMIII/HAP and PMIV, heme detoxifying protein HDP and falcilysin FLN. The HFC complex is involved in hemoglobin degradation and detoxification of heme in the food vacuole during the asexual blood stage. In terms of processing, auto-cleaved to remove the propeptide.

It localises to the vacuole. Its subcellular location is the membrane. Inhibited by cysteine protease inhibitor ICP. Inhibited by heme and heme analogs. In terms of biological role, cysteine protease which cleaves native host hemoglobin and globin in the food vacuole during the asexual blood stage. The binding to host hemoglobin is pH-sensitive and only occurs at acidic pH. Cleaves ankyrin and protein 4.1, two components of host erythrocyte membrane cytoskeleton required for the stability of the erythrocyte membrane, and thus may be involved in parasite release. Preferentially cleaves substrates which have an arginine or lysine at the P1 position and a leucine or phenylalanine at the P2 position. In Plasmodium falciparum (isolate 3D7), this protein is Falcipain-2a.